Here is a 279-residue protein sequence, read N- to C-terminus: Prohibitin-4, mitochondrial (279 aa).

Residue Gly-2 is modified to N-acetylglycine. The Mitochondrial matrix portion of the chain corresponds to 2–6 (GSQQV). Residues 7 to 28 (AISFLTNLAKAAFGLGVAATAL) traverse the membrane as a helical; Signal-anchor for type II membrane protein segment. The Mitochondrial intermembrane portion of the chain corresponds to 29 to 279 (NSSLYTVDGG…SMLFNLNPGR (251 aa)).

The protein belongs to the prohibitin family. In terms of assembly, component of a prohibitin multimeric complex in mitochondrial membranes. Mostly expressed in proliferative tissues, including vasculature, shoot and root apical tissues. Accumulates in dry seeds.

It localises to the mitochondrion inner membrane. Its function is as follows. Prohibitin probably acts as a holdase/unfoldase for the stabilization of newly synthesized mitochondrial proteins. This Arabidopsis thaliana (Mouse-ear cress) protein is Prohibitin-4, mitochondrial (PHB4).